Reading from the N-terminus, the 282-residue chain is Bis(5'-nucleosyl)-tetraphosphatase, symmetrical (282 aa).

This sequence belongs to the Ap4A hydrolase family.

It catalyses the reaction P(1),P(4)-bis(5'-adenosyl) tetraphosphate + H2O = 2 ADP + 2 H(+). Functionally, hydrolyzes diadenosine 5',5'''-P1,P4-tetraphosphate to yield ADP. This Escherichia coli O45:K1 (strain S88 / ExPEC) protein is Bis(5'-nucleosyl)-tetraphosphatase, symmetrical.